Reading from the N-terminus, the 94-residue chain is Putative toxin RelE4 (94 aa).

This sequence belongs to the RelE toxin family.

In terms of biological role, toxic component of a type II toxin-antitoxin (TA) system. Its cognate antitoxin is RelB4 (Potential). The protein is Putative toxin RelE4 (relE4) of Methanocaldococcus jannaschii (strain ATCC 43067 / DSM 2661 / JAL-1 / JCM 10045 / NBRC 100440) (Methanococcus jannaschii).